Consider the following 228-residue polypeptide: Acyl-protein thioesterase 1 (228 aa).

Active-site charge relay system residues include S119, D174, and H208.

It belongs to the AB hydrolase superfamily. AB hydrolase 2 family.

Its subcellular location is the cytoplasm. The protein localises to the nucleus. The enzyme catalyses S-hexadecanoyl-L-cysteinyl-[protein] + H2O = L-cysteinyl-[protein] + hexadecanoate + H(+). Hydrolyzes fatty acids from S-acylated cysteine residues in proteins with a strong preference for palmitoylated G-alpha proteins over other acyl substrates. Mediates the deacylation of G-alpha proteins such as GPA1 in vivo, but has weak or no activity toward palmitoylated Ras proteins. Has weak lysophospholipase activity in vitro; however such activity may not exist in vivo. The sequence is that of Acyl-protein thioesterase 1 from Kluyveromyces lactis (strain ATCC 8585 / CBS 2359 / DSM 70799 / NBRC 1267 / NRRL Y-1140 / WM37) (Yeast).